Reading from the N-terminus, the 64-residue chain is Prokaryotic ubiquitin-like protein Pup (64 aa).

Basic and acidic residues predominate over residues 1–11 (MAQEQTKRTGG). The segment at 1–37 (MAQEQTKRTGGGDEDDTPGADGAAGQERREKLAEDTD) is disordered. The segment at 21 to 58 (DGAAGQERREKLAEDTDDLLDEIDDVLEENAEDFVRAY) is ARC ATPase binding. Residues 24 to 52 (AGQERREKLAEDTDDLLDEIDDVLEENAE) adopt a coiled-coil conformation. Position 64 is a deamidated glutamine (Gln64). An Isoglutamyl lysine isopeptide (Gln-Lys) (interchain with K-? in acceptor proteins) cross-link involves residue Gln64.

The protein belongs to the prokaryotic ubiquitin-like protein family. Strongly interacts with the proteasome-associated ATPase ARC through a hydrophobic interface; the interacting region of Pup lies in its C-terminal half. There is one Pup binding site per ARC hexamer ring. In terms of processing, is modified by deamidation of its C-terminal glutamine to glutamate by the deamidase Dop, a prerequisite to the subsequent pupylation process.

The protein operates within protein degradation; proteasomal Pup-dependent pathway. Functionally, protein modifier that is covalently attached to lysine residues of substrate proteins, thereby targeting them for proteasomal degradation. The tagging system is termed pupylation. The polypeptide is Prokaryotic ubiquitin-like protein Pup (Rhodococcus jostii (strain RHA1)).